The chain runs to 151 residues: Deoxyuridine 5'-triphosphate nucleotidohydrolase (151 aa).

Substrate-binding positions include Arg70 to Gly72, Asn83, Leu87 to Asp89, and Met97.

This sequence belongs to the dUTPase family. Requires Mg(2+) as cofactor.

The catalysed reaction is dUTP + H2O = dUMP + diphosphate + H(+). Its pathway is pyrimidine metabolism; dUMP biosynthesis; dUMP from dCTP (dUTP route): step 2/2. In terms of biological role, this enzyme is involved in nucleotide metabolism: it produces dUMP, the immediate precursor of thymidine nucleotides and it decreases the intracellular concentration of dUTP so that uracil cannot be incorporated into DNA. The sequence is that of Deoxyuridine 5'-triphosphate nucleotidohydrolase from Ectopseudomonas mendocina (strain ymp) (Pseudomonas mendocina).